Reading from the N-terminus, the 417-residue chain is Probable sugar-binding periplasmic protein (417 aa).

Residues 1 to 21 form the signal peptide; that stretch reads MLRKLLIGTALATSFAFSAHA.

This sequence belongs to the bacterial solute-binding protein 1 family.

The protein localises to the periplasm. Part of a binding-protein-dependent transport system for a sugar. This chain is Probable sugar-binding periplasmic protein, found in Mesorhizobium japonicum (strain LMG 29417 / CECT 9101 / MAFF 303099) (Mesorhizobium loti (strain MAFF 303099)).